Here is a 253-residue protein sequence, read N- to C-terminus: 3-deoxy-manno-octulosonate cytidylyltransferase (253 aa).

This sequence belongs to the KdsB family.

The protein localises to the cytoplasm. It carries out the reaction 3-deoxy-alpha-D-manno-oct-2-ulosonate + CTP = CMP-3-deoxy-beta-D-manno-octulosonate + diphosphate. It functions in the pathway nucleotide-sugar biosynthesis; CMP-3-deoxy-D-manno-octulosonate biosynthesis; CMP-3-deoxy-D-manno-octulosonate from 3-deoxy-D-manno-octulosonate and CTP: step 1/1. Its pathway is bacterial outer membrane biogenesis; lipopolysaccharide biosynthesis. Its function is as follows. Activates KDO (a required 8-carbon sugar) for incorporation into bacterial lipopolysaccharide in Gram-negative bacteria. This chain is 3-deoxy-manno-octulosonate cytidylyltransferase, found in Neisseria meningitidis serogroup A / serotype 4A (strain DSM 15465 / Z2491).